Reading from the N-terminus, the 234-residue chain is 2-hydroxy-3-keto-5-methylthiopentenyl-1-phosphate phosphatase (234 aa).

The protein belongs to the HAD-like hydrolase superfamily. MtnX family.

It catalyses the reaction 2-hydroxy-5-methylsulfanyl-3-oxopent-1-enyl phosphate + H2O = 1,2-dihydroxy-5-(methylsulfanyl)pent-1-en-3-one + phosphate. It functions in the pathway amino-acid biosynthesis; L-methionine biosynthesis via salvage pathway; L-methionine from S-methyl-5-thio-alpha-D-ribose 1-phosphate: step 4/6. Functionally, dephosphorylates 2-hydroxy-3-keto-5-methylthiopentenyl-1-phosphate (HK-MTPenyl-1-P) yielding 1,2-dihydroxy-3-keto-5-methylthiopentene (DHK-MTPene). The chain is 2-hydroxy-3-keto-5-methylthiopentenyl-1-phosphate phosphatase from Bacillus velezensis (strain DSM 23117 / BGSC 10A6 / LMG 26770 / FZB42) (Bacillus amyloliquefaciens subsp. plantarum).